A 340-amino-acid polypeptide reads, in one-letter code: Ferrochelatase (340 aa).

Histidine 189 and glutamate 292 together coordinate Fe cation.

It belongs to the ferrochelatase family.

The protein localises to the cytoplasm. The enzyme catalyses heme b + 2 H(+) = protoporphyrin IX + Fe(2+). The protein operates within porphyrin-containing compound metabolism; protoheme biosynthesis; protoheme from protoporphyrin-IX: step 1/1. In terms of biological role, catalyzes the ferrous insertion into protoporphyrin IX. In Pseudomonas paraeruginosa (strain DSM 24068 / PA7) (Pseudomonas aeruginosa (strain PA7)), this protein is Ferrochelatase.